The following is a 358-amino-acid chain: Myb family transcription factor IPN2 (358 aa).

The tract at residues 1-20 (MERMFPPKKPSTMNSHDRPM) is disordered. Residues 32-92 (TDPKPRLRWT…HLQKFRLGKQ (61 aa)) form the HTH myb-type domain. The segment at residues 63–88 (PKTIMRVMGVKGLTLYHLKSHLQKFR) is a DNA-binding region (H-T-H motif). A coiled-coil region spans residues 127–171 (NMNEMQIEVQRRLHEQLEVQKHLQLRIEAQGKYMQSILEKAYQTL). Positions 139–144 (LHEQLE) match the LHEQLE motif. The tract at residues 310-358 (IYDSKPEEKKFDASMKLERPSPRRAPLGERMSPMITTGTMAQGRSSPFG) is disordered. The segment covering 311 to 330 (YDSKPEEKKFDASMKLERPS) has biased composition (basic and acidic residues). Residues 343–358 (MITTGTMAQGRSSPFG) are compositionally biased toward polar residues.

This sequence belongs to the MYB-CC family. As to quaternary structure, interacts with NSP2. Expressed in leaves, stems, nodules and roots.

It is found in the nucleus. Its function is as follows. Transcriptional regulator required for Nod-factor-induced gene expression. Transcription activator involved in the induction of NIN and ENOD40 genes, which are required for rhizobial infection and early nodule development. Possesses strong transactivation activity in vitro. Does not seem to contribute to the early steps of the arbuscular mycorrhizal fungus infection and colonization processes in roots. The polypeptide is Myb family transcription factor IPN2 (Lotus japonicus (Lotus corniculatus var. japonicus)).